We begin with the raw amino-acid sequence, 167 residues long: Ubiquitin-conjugating enzyme E2 14 (167 aa).

A2 carries the post-translational modification N-acetylalanine. One can recognise a UBC core domain in the interval 5-165 (QASLLLQKQL…VSRCVRRSQE (161 aa)). C90 acts as the Glycyl thioester intermediate in catalysis.

Belongs to the ubiquitin-conjugating enzyme family.

The enzyme catalyses S-ubiquitinyl-[E1 ubiquitin-activating enzyme]-L-cysteine + [E2 ubiquitin-conjugating enzyme]-L-cysteine = [E1 ubiquitin-activating enzyme]-L-cysteine + S-ubiquitinyl-[E2 ubiquitin-conjugating enzyme]-L-cysteine.. It functions in the pathway protein modification; protein ubiquitination. In terms of biological role, accepts the ubiquitin from the E1 complex and catalyzes its covalent attachment to other proteins. Involved in the formation of multiubiquitin chains. Signal the protein for selective degradation. The chain is Ubiquitin-conjugating enzyme E2 14 (UBC14) from Arabidopsis thaliana (Mouse-ear cress).